Here is a 139-residue protein sequence, read N- to C-terminus: Ribonuclease P protein component (139 aa).

The protein belongs to the RnpA family. In terms of assembly, consists of a catalytic RNA component (M1 or rnpB) and a protein subunit.

It carries out the reaction Endonucleolytic cleavage of RNA, removing 5'-extranucleotides from tRNA precursor.. Functionally, RNaseP catalyzes the removal of the 5'-leader sequence from pre-tRNA to produce the mature 5'-terminus. It can also cleave other RNA substrates such as 4.5S RNA. The protein component plays an auxiliary but essential role in vivo by binding to the 5'-leader sequence and broadening the substrate specificity of the ribozyme. This Paraburkholderia xenovorans (strain LB400) protein is Ribonuclease P protein component.